The following is a 171-amino-acid chain: Co-chaperone protein HscB homolog (171 aa).

Residues 2-69 enclose the J domain; that stretch reads NHFELFDLPV…DSRAAYLLSL (68 aa).

This sequence belongs to the HscB family. As to quaternary structure, interacts with HscA and stimulates its ATPase activity.

Functionally, co-chaperone involved in the maturation of iron-sulfur cluster-containing proteins. Seems to help targeting proteins to be folded toward HscA. This chain is Co-chaperone protein HscB homolog, found in Acinetobacter baylyi (strain ATCC 33305 / BD413 / ADP1).